Here is a 513-residue protein sequence, read N- to C-terminus: 2,3-bisphosphoglycerate-independent phosphoglycerate mutase (513 aa).

Residues Asp-13 and Ser-63 each coordinate Mn(2+). Ser-63 serves as the catalytic Phosphoserine intermediate. Substrate contacts are provided by residues His-124, 154 to 155 (RD), Arg-186, Arg-192, 262 to 265 (RADR), and Lys-335. Mn(2+) is bound by residues Asp-403, His-407, Asp-444, His-445, and His-463.

The protein belongs to the BPG-independent phosphoglycerate mutase family. In terms of assembly, monomer. The cofactor is Mn(2+).

The enzyme catalyses (2R)-2-phosphoglycerate = (2R)-3-phosphoglycerate. It participates in carbohydrate degradation; glycolysis; pyruvate from D-glyceraldehyde 3-phosphate: step 3/5. Catalyzes the interconversion of 2-phosphoglycerate and 3-phosphoglycerate. The polypeptide is 2,3-bisphosphoglycerate-independent phosphoglycerate mutase (Myxococcus xanthus (strain DK1622)).